A 655-amino-acid chain; its full sequence is 1-deoxy-D-xylulose-5-phosphate synthase (655 aa).

Residues His-73 and 114 to 116 (SHA) contribute to the thiamine diphosphate site. Residue Asp-145 participates in Mg(2+) binding. Thiamine diphosphate-binding positions include 146-147 (GA), Asn-174, Tyr-285, and Glu-367. Mg(2+) is bound at residue Asn-174. The disordered stretch occupies residues 626–655 (RQPAIEDDPTSPGEAAPAGERAGEAIGDQR). Residues 646–655 (RAGEAIGDQR) are compositionally biased toward basic and acidic residues.

This sequence belongs to the transketolase family. DXPS subfamily. As to quaternary structure, homodimer. Requires Mg(2+) as cofactor. Thiamine diphosphate is required as a cofactor.

The catalysed reaction is D-glyceraldehyde 3-phosphate + pyruvate + H(+) = 1-deoxy-D-xylulose 5-phosphate + CO2. Its pathway is metabolic intermediate biosynthesis; 1-deoxy-D-xylulose 5-phosphate biosynthesis; 1-deoxy-D-xylulose 5-phosphate from D-glyceraldehyde 3-phosphate and pyruvate: step 1/1. Its function is as follows. Catalyzes the acyloin condensation reaction between C atoms 2 and 3 of pyruvate and glyceraldehyde 3-phosphate to yield 1-deoxy-D-xylulose-5-phosphate (DXP). This chain is 1-deoxy-D-xylulose-5-phosphate synthase, found in Frankia casuarinae (strain DSM 45818 / CECT 9043 / HFP020203 / CcI3).